A 1020-amino-acid chain; its full sequence is Sodium/potassium-transporting ATPase subunit alpha-2 (1020 aa).

Residues methionine 1 to alanine 5 constitute a propeptide that is removed on maturation. The disordered stretch occupies residues methionine 1 to aspartate 31. At glycine 6 to proline 85 the chain is on the cytoplasmic side. The residue at position 10 (serine 10) is a Phosphoserine. The interval proline 80–proline 82 is interaction with phosphoinositide-3 kinase. The helical transmembrane segment at glutamate 86 to alanine 106 threads the bilayer. Residues isoleucine 107–tyrosine 129 lie on the Extracellular side of the membrane. Residues leucine 130–alanine 150 form a helical membrane-spanning segment. At lysine 151 to isoleucine 286 the chain is on the cytoplasmic side. The segment covering aspartate 212–proline 227 has biased composition (polar residues). Positions aspartate 212–histidine 231 are disordered. Residues glutamate 287–valine 306 traverse the membrane as a helical segment. The Extracellular portion of the chain corresponds to leucine 307–alanine 318. The helical transmembrane segment at valine 319 to alanine 336 threads the bilayer. Residues threonine 337–leucine 769 lie on the Cytoplasmic side of the membrane. Aspartate 374 functions as the 4-aspartylphosphate intermediate in the catalytic mechanism. Serine 439, serine 450, and serine 559 each carry phosphoserine. Phosphothreonine is present on threonine 570. Serine 587 and serine 672 each carry phosphoserine. Positions 714 and 718 each coordinate Mg(2+). A helical transmembrane segment spans residues lysine 770–leucine 789. Residues phenylalanine 790 to leucine 799 are Extracellular-facing. Residues glycine 800–alanine 820 traverse the membrane as a helical segment. The Cytoplasmic portion of the chain corresponds to tyrosine 821–lysine 840. At serine 826 the chain carries Phosphoserine. A helical membrane pass occupies residues leucine 841–phenylalanine 863. At phenylalanine 864–cysteine 915 the chain is on the extracellular side. The helical transmembrane segment at histidine 916–lysine 935 threads the bilayer. Residues threonine 936–asparagine 948 are Cytoplasmic-facing. Serine 940 is subject to Phosphoserine; by PKA. The chain crosses the membrane as a helical span at residues lysine 949 to tyrosine 967. Over cysteine 968 to valine 982 the chain is Extracellular. A helical transmembrane segment spans residues threonine 983 to lysine 1003. Residues leucine 1004–tyrosine 1020 are Cytoplasmic-facing.

The protein belongs to the cation transport ATPase (P-type) (TC 3.A.3) family. Type IIC subfamily. As to quaternary structure, the sodium/potassium-transporting ATPase is composed of a catalytic alpha subunit, an auxiliary non-catalytic beta subunit and an additional regulatory subunit. Interacts with regulatory subunit FXYD1.

The protein resides in the membrane. The protein localises to the cell membrane. It carries out the reaction K(+)(out) + Na(+)(in) + ATP + H2O = K(+)(in) + Na(+)(out) + ADP + phosphate + H(+). Functionally, this is the catalytic component of the active enzyme, which catalyzes the hydrolysis of ATP coupled with the exchange of sodium and potassium ions across the plasma membrane. This action creates the electrochemical gradient of sodium and potassium, providing the energy for active transport of various nutrients. This Sus scrofa (Pig) protein is Sodium/potassium-transporting ATPase subunit alpha-2 (ATP1A2).